Consider the following 533-residue polypeptide: Subtilisin-like protease 1 (533 aa).

An N-terminal signal peptide occupies residues 1–19 (MGVFRFISISLAAVSAANA). A propeptide spanning residues 20-116 (AQILSMPHAQ…VEPDTIISVH (97 aa)) is cleaved from the precursor. An Inhibitor I9 domain is found at 34–115 (SYIVMMKDDT…FVEPDTIISV (82 aa)). One can recognise a Peptidase S8 domain in the interval 126-400 (SWGLARISNP…NVLINNGGAK (275 aa)). Active-site charge relay system residues include aspartate 158 and histidine 190. A disordered region spans residues 175–198 (GSNQVNDGDDRDGSGHGTHTSGTM). Residues asparagine 233 and asparagine 251 are each glycosylated (N-linked (GlcNAc...) asparagine). Residues 282–294 (NDNQDAQSSSPAS) show a composition bias toward polar residues. The interval 282 to 312 (NDNQDAQSSSPASEPSVCTVGSSAEDDSRSS) is disordered. Residue serine 345 is the Charge relay system of the active site. Polar residues predominate over residues 378–394 (TSSITDAGPGTPTNVLI). Residues 378–512 (TSSITDAGPG…YPGGDNFDFD (135 aa)) are disordered. Residues 405-470 (NPNPAPSPSP…FPGEPFPGEP (66 aa)) show a composition bias toward pro residues. A compositionally biased stretch (low complexity) spans 471–487 (FPGESFPGESFPGESAP). The span at 488 to 502 (APAPMPPSPQHPHTP) shows a compositional bias: pro residues.

This sequence belongs to the peptidase S8 family.

The protein resides in the secreted. Functionally, secreted subtilisin-like serine protease with keratinolytic activity that contributes to pathogenicity. This is Subtilisin-like protease 1 (SUB1) from Arthroderma benhamiae (strain ATCC MYA-4681 / CBS 112371) (Trichophyton mentagrophytes).